The following is a 494-amino-acid chain: Putative bifunctional dihydrofolate reductase-thymidylate synthase (494 aa).

The region spanning 1–167 (MGIGKDGTLP…IKHSFISFVR (167 aa)) is the DHFR domain. Position 2–8 (2–8 (GIGKDGT)) interacts with NADP(+). Asp-16 serves as a coordination point for substrate. Residues 40–42 (RKT) and 61–64 (LTRS) each bind NADP(+). A substrate-binding site is contributed by Ile-103. 104–111 (GGGEILRQ) is an NADP(+) binding site. Thr-124 contacts substrate. The interval 170 to 494 (KSIAEANDSS…HHKIEMKMAV (325 aa)) is thymidylate synthase. A dUMP-binding site is contributed by Arg-231. Residue Cys-376 is part of the active site. DUMP-binding positions include His-377, 395-399 (QRSAD), Asn-407, and 437-439 (HVY).

The protein in the N-terminal section; belongs to the dihydrofolate reductase family. It in the C-terminal section; belongs to the thymidylate synthase family.

It catalyses the reaction (6S)-5,6,7,8-tetrahydrofolate + NADP(+) = 7,8-dihydrofolate + NADPH + H(+). The enzyme catalyses dUMP + (6R)-5,10-methylene-5,6,7,8-tetrahydrofolate = 7,8-dihydrofolate + dTMP. It functions in the pathway cofactor biosynthesis; tetrahydrofolate biosynthesis; 5,6,7,8-tetrahydrofolate from 7,8-dihydrofolate: step 1/1. Its function is as follows. Bifunctional enzyme. Involved in de novo dTMP biosynthesis. Key enzyme in folate metabolism. Can play two different roles depending on the source of dihydrofolate: de novo synthesis of tetrahydrofolate or recycling of the dihydrofolate released as one of the end products of the TS catalyzed reaction. Catalyzes an essential reaction for de novo glycine and purine synthesis, DNA precursor synthesis, and for the conversion of dUMP to dTMP. The protein is Putative bifunctional dihydrofolate reductase-thymidylate synthase of Oryza sativa subsp. japonica (Rice).